A 435-amino-acid polypeptide reads, in one-letter code: Angio-associated migratory cell protein (435 aa).

The segment at 1–65 (MESESESGAA…EEEEEGNEEG (65 aa)) is disordered. Ser20 is subject to Phosphoserine. Over residues 39-63 (DPDDLAQEMEDVDFEEEEEEEEGNE) the composition is skewed to acidic residues. WD repeat units lie at residues 90-130 (LHSA…LLFE), 133-172 (GHKDSVTCAGFSHDSTLVATGDMSGLLKVWQVDTKEEVWS), 174-213 (EAGDLEWMEWHPRAPVLLAGTADGNTWMWKVPNGDCKTFQ), 215-255 (PNCP…HVLK), 259-300 (GHQG…GVFR), 316-355 (SESNSVESLGFCSVMPLAAVGYLDGTLAIYDLSTQTLRHQ), 357-396 (QHQSGIVQLLWEAGTAVVYTCSLDGIVRLWDARTGRLLTD), and 399-434 (GHTAEILDFALSKDASLVVTTSGDHKAKVFCVQRPD).

Its subcellular location is the cell membrane. The protein localises to the cytoplasm. In terms of biological role, plays a role in angiogenesis and cell migration. In smooth muscle cell migration, may act through the RhoA pathway. This chain is Angio-associated migratory cell protein (AAMP), found in Canis lupus familiaris (Dog).